Consider the following 92-residue polypeptide: Small ribosomal subunit protein bS20 (92 aa).

The interval 1 to 23 is disordered; it reads MANSPSAKKRAKQAEKRRSHNAS. Basic residues predominate over residues 7 to 20; sequence AKKRAKQAEKRRSH.

The protein belongs to the bacterial ribosomal protein bS20 family.

In terms of biological role, binds directly to 16S ribosomal RNA. The polypeptide is Small ribosomal subunit protein bS20 (Ectopseudomonas mendocina (strain ymp) (Pseudomonas mendocina)).